The primary structure comprises 557 residues: Urocanate hydratase (557 aa).

NAD(+) contacts are provided by residues 52–53 (GG), Gln-130, 176–178 (GMG), Glu-196, 242–243 (NA), 263–267 (QTSAH), 273–274 (YL), and Tyr-322. Cys-410 is an active-site residue. Gly-492 is an NAD(+) binding site.

It belongs to the urocanase family. It depends on NAD(+) as a cofactor.

The protein resides in the cytoplasm. The catalysed reaction is 4-imidazolone-5-propanoate = trans-urocanate + H2O. It functions in the pathway amino-acid degradation; L-histidine degradation into L-glutamate; N-formimidoyl-L-glutamate from L-histidine: step 2/3. Its function is as follows. Catalyzes the conversion of urocanate to 4-imidazolone-5-propionate. This Rhizobium meliloti (strain 1021) (Ensifer meliloti) protein is Urocanate hydratase.